A 414-amino-acid polypeptide reads, in one-letter code: Histidinol dehydrogenase (414 aa).

Tyrosine 116, glutamine 177, and asparagine 200 together coordinate NAD(+). Positions 223, 245, and 248 each coordinate substrate. Zn(2+) contacts are provided by glutamine 245 and histidine 248. Residues glutamate 313 and histidine 314 each act as proton acceptor in the active site. Residues histidine 314, aspartate 347, glutamate 401, and histidine 406 each coordinate substrate. Aspartate 347 contributes to the Zn(2+) binding site. Histidine 406 provides a ligand contact to Zn(2+).

It belongs to the histidinol dehydrogenase family. Requires Zn(2+) as cofactor.

The enzyme catalyses L-histidinol + 2 NAD(+) + H2O = L-histidine + 2 NADH + 3 H(+). The protein operates within amino-acid biosynthesis; L-histidine biosynthesis; L-histidine from 5-phospho-alpha-D-ribose 1-diphosphate: step 9/9. Functionally, catalyzes the sequential NAD-dependent oxidations of L-histidinol to L-histidinaldehyde and then to L-histidine. The protein is Histidinol dehydrogenase of Staphylococcus epidermidis (strain ATCC 12228 / FDA PCI 1200).